Reading from the N-terminus, the 351-residue chain is N-acetyl-gamma-glutamyl-phosphate reductase (351 aa).

Cys-154 is an active-site residue.

This sequence belongs to the NAGSA dehydrogenase family. Type 1 subfamily.

The protein resides in the cytoplasm. It catalyses the reaction N-acetyl-L-glutamate 5-semialdehyde + phosphate + NADP(+) = N-acetyl-L-glutamyl 5-phosphate + NADPH + H(+). The protein operates within amino-acid biosynthesis; L-arginine biosynthesis; N(2)-acetyl-L-ornithine from L-glutamate: step 3/4. Its function is as follows. Catalyzes the NADPH-dependent reduction of N-acetyl-5-glutamyl phosphate to yield N-acetyl-L-glutamate 5-semialdehyde. This Prochlorococcus marinus (strain MIT 9515) protein is N-acetyl-gamma-glutamyl-phosphate reductase.